We begin with the raw amino-acid sequence, 100 residues long: Large ribosomal subunit protein uL23 (100 aa).

It belongs to the universal ribosomal protein uL23 family. Part of the 50S ribosomal subunit. Contacts protein L29, and trigger factor when it is bound to the ribosome.

Its function is as follows. One of the early assembly proteins it binds 23S rRNA. One of the proteins that surrounds the polypeptide exit tunnel on the outside of the ribosome. Forms the main docking site for trigger factor binding to the ribosome. This Mycobacteroides abscessus (strain ATCC 19977 / DSM 44196 / CCUG 20993 / CIP 104536 / JCM 13569 / NCTC 13031 / TMC 1543 / L948) (Mycobacterium abscessus) protein is Large ribosomal subunit protein uL23.